The sequence spans 332 residues: NADH-quinone oxidoreductase subunit H (332 aa).

The next 9 helical transmembrane spans lie at 4–24 (FAFF…IFAS), 44–64 (IGPD…MIKL), 78–98 (FIFA…LAAI), 120–140 (VALL…FLGG), 165–185 (VGAL…LVDI), 194–214 (FSWL…ALFI), 255–275 (IAGA…FWII), 279–299 (IMMI…RAAF), and 312–332 (YLIL…TVLL).

It belongs to the complex I subunit 1 family. In terms of assembly, NDH-1 is composed of 14 different subunits. Subunits NuoA, H, J, K, L, M, N constitute the membrane sector of the complex.

It is found in the cell inner membrane. It catalyses the reaction a quinone + NADH + 5 H(+)(in) = a quinol + NAD(+) + 4 H(+)(out). Functionally, NDH-1 shuttles electrons from NADH, via FMN and iron-sulfur (Fe-S) centers, to quinones in the respiratory chain. The immediate electron acceptor for the enzyme in this species is believed to be ubiquinone. Couples the redox reaction to proton translocation (for every two electrons transferred, four hydrogen ions are translocated across the cytoplasmic membrane), and thus conserves the redox energy in a proton gradient. This subunit may bind ubiquinone. The polypeptide is NADH-quinone oxidoreductase subunit H (Campylobacter jejuni subsp. jejuni serotype O:23/36 (strain 81-176)).